The chain runs to 177 residues: Probable DNA-directed RNA polymerase subunit delta (177 aa).

The HTH HARE-type domain maps to 14-81 (CSMIEVVHSV…GENRWGLRSW (68 aa)). The segment at 93–177 (PQPKPKKKRK…ETEEEEEEEL (85 aa)) is disordered. Acidic residues predominate over residues 106–177 (DGFDDYIEED…ETEEEEEEEL (72 aa)).

Belongs to the RpoE family. RNAP is composed of a core of 2 alpha, a beta and a beta' subunits. The core is associated with a delta subunit and one of several sigma factors.

In terms of biological role, participates in both the initiation and recycling phases of transcription. In the presence of the delta subunit, RNAP displays an increased specificity of transcription, a decreased affinity for nucleic acids, and an increased efficiency of RNA synthesis because of enhanced recycling. This chain is Probable DNA-directed RNA polymerase subunit delta, found in Bacillus cereus (strain AH187).